The sequence spans 430 residues: Trigger factor (430 aa).

The 86-residue stretch at 164-249 folds into the PPIase FKBP-type domain; the sequence is DDWAVIDHEG…LKALKTRQLP (86 aa).

This sequence belongs to the FKBP-type PPIase family. Tig subfamily.

The protein resides in the cytoplasm. It catalyses the reaction [protein]-peptidylproline (omega=180) = [protein]-peptidylproline (omega=0). Functionally, involved in protein export. Acts as a chaperone by maintaining the newly synthesized protein in an open conformation. Functions as a peptidyl-prolyl cis-trans isomerase. In Anaeromyxobacter sp. (strain Fw109-5), this protein is Trigger factor.